Consider the following 209-residue polypeptide: UPF0319 protein VFMJ11_1730 (209 aa).

An N-terminal signal peptide occupies residues 1-21; sequence MKIQSIFAASFCLLSSISAHA.

It belongs to the UPF0319 family.

The polypeptide is UPF0319 protein VFMJ11_1730 (Aliivibrio fischeri (strain MJ11) (Vibrio fischeri)).